Consider the following 93-residue polypeptide: Zinc metalloproteinase-disintegrin-like leucurogin (93 aa).

The 86-residue stretch at 8–93 (PPVCGNELLE…SECPADVGHK (86 aa)) folds into the Disintegrin domain. Residues Val10, Asn13, Leu15, Glu17, Glu20, and Asp23 each coordinate Ca(2+). 7 cysteine pairs are disulfide-bonded: Cys11–Cys40, Cys22–Cys35, Cys24–Cys30, Cys34–Cys57, Cys48–Cys54, Cys53–Cys79, and Cys66–Cys86. Positions 72-74 (ECD) match the D/ECD-tripeptide motif. Residues Asp74, Pro75, Glu77, Asp89, and Val90 each contribute to the Ca(2+) site. A disordered region spans residues 74-93 (DPAEHCTGQSSECPADVGHK).

The protein belongs to the venom metalloproteinase (M12B) family. P-III subfamily. As to quaternary structure, monomer. The cofactor is Zn(2+). N-glycosylated. In terms of tissue distribution, expressed by the venom gland.

It localises to the secreted. Its function is as follows. Snake venom zinc metalloprotease that possesses hemorrhagic activity. The disintegrin-like domain has been expressed and named leucurogin. This recombinant disintegrin is able to inhibit collagen-induced platelet aggregation but not ADP- or arachidonic acid-induced platelet aggregation. Furthermore, it inhibits the adhesion of human fibroblasts to collagen type I. It also reduces adhesion and migration of human fibroblasts and inhibits migration and proliferation of human and mouse melanoma cell lines (BLM, and B16-F10-Nex2). In vitro, it inhibits the vascular structures formation by endothelial cells. In addition, it inhibits the growth of experimental Ehrlich tumor and has anti-angiogenesis effect on the sponge implant model. In vivo, when intraperitoneally injected into mice, it inhibits lung metastasis of B16F10 Nex-2 cells. In the treatment of human melanoma, grafted intradermally in the nude mice flank, it inhibits tumor growth. This chain is Zinc metalloproteinase-disintegrin-like leucurogin, found in Bothrops leucurus (Whitetail lancehead).